Reading from the N-terminus, the 138-residue chain is Basic phospholipase A2 homolog TM-N49 (138 aa).

A signal peptide spans Met-1 to Gly-16. Disulfide bonds link Cys-42–Cys-131, Cys-44–Cys-60, Cys-59–Cys-111, Cys-65–Cys-138, Cys-66–Cys-104, Cys-73–Cys-97, and Cys-91–Cys-102.

This sequence belongs to the phospholipase A2 family. Group II subfamily. N49 sub-subfamily. In terms of assembly, homodimer; non-covalently linked. Expressed by the venom gland.

The protein resides in the secreted. Functionally, snake venom phospholipase A2 (PLA2) that exhibits potent myotoxic activity causing inflammatory cell infiltration, severe myoedema, myonecrosis and myolysis in the gastrocnemius muscles of BALB/c mice. The chain is Basic phospholipase A2 homolog TM-N49 from Protobothrops mucrosquamatus (Taiwan habu).